Consider the following 138-residue polypeptide: Phospholipase A2 homolog mojave toxin acidic chain (138 aa).

Residues 1–40 form the signal peptide; it reads MRALWIVAVLLVGVEGSLVEFETLIMKIAGRSGISYYSSY. 7 disulfide bridges follow: cysteine 42-cysteine 131, cysteine 44-cysteine 60, cysteine 59-cysteine 111, cysteine 65-cysteine 138, cysteine 66-cysteine 104, cysteine 73-cysteine 97, and cysteine 91-cysteine 102. A propeptide spanning residues 81-83 is cleaved from the precursor; that stretch reads TYR. Residue glutamine 84 is modified to Pyrrolidone carboxylic acid. Residues 120–126 constitute a propeptide that is removed on maturation; that stretch reads DYKYLRF.

It belongs to the phospholipase A2 family. Group II subfamily. D49 sub-subfamily. Heterodimer of an acidic and a basic chain. The acidic subunit is non-toxic, without enzymatic activity and comprises 3 peptides that are cross-linked by 5 disulfide bridges. The basic subunit is toxic, has phospholipase A2 activity and is composed of a single chain. Ca(2+) is required as a cofactor. Expressed by the venom gland.

The protein localises to the secreted. In terms of biological role, snake venom phospholipase A2 (PLA2) that inhibits neuromuscular transmission by blocking acetylcholine release from the nerve termini. This chain is Phospholipase A2 homolog mojave toxin acidic chain, found in Crotalus scutulatus scutulatus (Mojave rattlesnake).